The following is a 235-amino-acid chain: Geranylgeranylglyceryl phosphate synthase (235 aa).

Residue K13 coordinates sn-glycerol 1-phosphate. 2 residues coordinate Mg(2+): D15 and T42. Sn-glycerol 1-phosphate is bound by residues 162–167, G192, and 212–213; these read YVEYSG and GD.

This sequence belongs to the GGGP/HepGP synthase family. Group I subfamily. Requires Mg(2+) as cofactor.

The protein localises to the cytoplasm. The enzyme catalyses sn-glycerol 1-phosphate + (2E,6E,10E)-geranylgeranyl diphosphate = sn-3-O-(geranylgeranyl)glycerol 1-phosphate + diphosphate. It participates in membrane lipid metabolism; glycerophospholipid metabolism. Functionally, prenyltransferase that catalyzes the transfer of the geranylgeranyl moiety of geranylgeranyl diphosphate (GGPP) to the C3 hydroxyl of sn-glycerol-1-phosphate (G1P). This reaction is the first ether-bond-formation step in the biosynthesis of archaeal membrane lipids. The chain is Geranylgeranylglyceryl phosphate synthase from Natronomonas pharaonis (strain ATCC 35678 / DSM 2160 / CIP 103997 / JCM 8858 / NBRC 14720 / NCIMB 2260 / Gabara) (Halobacterium pharaonis).